A 205-amino-acid chain; its full sequence is GTP cyclohydrolase 1 (205 aa).

Cysteine 95, histidine 98, and cysteine 166 together coordinate Zn(2+).

This sequence belongs to the GTP cyclohydrolase I family. In terms of assembly, toroid-shaped homodecamer, composed of two pentamers of five dimers.

It carries out the reaction GTP + H2O = 7,8-dihydroneopterin 3'-triphosphate + formate + H(+). It participates in cofactor biosynthesis; 7,8-dihydroneopterin triphosphate biosynthesis; 7,8-dihydroneopterin triphosphate from GTP: step 1/1. This chain is GTP cyclohydrolase 1, found in Maricaulis maris (strain MCS10) (Caulobacter maris).